The primary structure comprises 159 residues: Phosphopantetheine adenylyltransferase (159 aa).

Ser9 contributes to the substrate binding site. Residues 9-10 (SF) and His17 each bind ATP. Residues Lys41, Leu73, and Lys87 each coordinate substrate. ATP-binding positions include 88–90 (GLR), Glu98, and 123–129 (YSYLSSS).

The protein belongs to the bacterial CoaD family. In terms of assembly, homohexamer. It depends on Mg(2+) as a cofactor.

It is found in the cytoplasm. It catalyses the reaction (R)-4'-phosphopantetheine + ATP + H(+) = 3'-dephospho-CoA + diphosphate. The protein operates within cofactor biosynthesis; coenzyme A biosynthesis; CoA from (R)-pantothenate: step 4/5. Reversibly transfers an adenylyl group from ATP to 4'-phosphopantetheine, yielding dephospho-CoA (dPCoA) and pyrophosphate. In Clostridium botulinum (strain Eklund 17B / Type B), this protein is Phosphopantetheine adenylyltransferase.